The sequence spans 240 residues: Gas vesicle protein C (240 aa).

Basic and acidic residues predominate over residues 1–13 (MALKDKWQQDRIG). Residues 1–20 (MALKDKWQQDRIGRQQGVQE) are disordered. Repeats lie at residues 18-50 (VQER…RQGF), 51-83 (VTGV…LENF), 84-116 (IQQL…LSEF), 117-149 (REDL…LAIF), and 150-207 (RQTL…LQDY). Residues 18 to 207 (VQERQQQVQT…GVFRAELQDY (190 aa)) form a 5 X 33 AA tandem repeats region.

It belongs to the gas vesicle GvpC family.

It localises to the gas vesicle. Functionally, confers stability, involved in shaping gas vesicles, hollow, gas filled proteinaceous nanostructures. During planktonic growth they allow positioning of the organism at a favorable depth for light or nutrient acquisition. The chain is Gas vesicle protein C from Planktothrix agardhii (Oscillatoria agardhii).